The primary structure comprises 899 residues: Bifunctional uridylyltransferase/uridylyl-removing enzyme (899 aa).

Residues 1 to 342 (MPQMDPELFD…RAGESGPATP (342 aa)) form a uridylyltransferase region. A uridylyl-removing region spans residues 343–705 (LNSRFQVRDG…TTQREFEGGT (363 aa)). One can recognise an HD domain in the interval 461–583 (VDAHTLNLIK…VGDQTHLDYL (123 aa)). ACT domains lie at 706-784 (QIFI…DEYP) and 816-897 (ILEL…SLQI).

This sequence belongs to the GlnD family. The cofactor is Mg(2+).

The catalysed reaction is [protein-PII]-L-tyrosine + UTP = [protein-PII]-uridylyl-L-tyrosine + diphosphate. It catalyses the reaction [protein-PII]-uridylyl-L-tyrosine + H2O = [protein-PII]-L-tyrosine + UMP + H(+). Its activity is regulated as follows. Uridylyltransferase (UTase) activity is inhibited by glutamine, while glutamine activates uridylyl-removing (UR) activity. In terms of biological role, modifies, by uridylylation and deuridylylation, the PII regulatory proteins (GlnB and homologs), in response to the nitrogen status of the cell that GlnD senses through the glutamine level. Under low glutamine levels, catalyzes the conversion of the PII proteins and UTP to PII-UMP and PPi, while under higher glutamine levels, GlnD hydrolyzes PII-UMP to PII and UMP (deuridylylation). Thus, controls uridylylation state and activity of the PII proteins, and plays an important role in the regulation of nitrogen assimilation and metabolism. The polypeptide is Bifunctional uridylyltransferase/uridylyl-removing enzyme (Ectopseudomonas mendocina (strain ymp) (Pseudomonas mendocina)).